We begin with the raw amino-acid sequence, 444 residues long: Docking protein 3 (444 aa).

In terms of domain architecture, PH spans 7–123; it reads PVKDGILYQQ…WVDPICQLAF (117 aa). Ser-138 bears the Phosphoserine mark. The IRS-type PTB domain occupies 157-261; sequence EVTEFPVIVQ…ARQRERLPEL (105 aa). Ser-274 is subject to Phosphoserine. A disordered region spans residues 278-299; it reads LEPPGELREVAPGFELPTPRKL. Residues Ser-308 and Ser-314 each carry the phosphoserine modification. Residue Tyr-325 is modified to Phosphotyrosine. Residues 354-390 are disordered; that stretch reads GLTNGGPEAQEGPPGGRSPLGSPIYHNTEDLSWPGSA. Residues 358–376 are compositionally biased toward low complexity; that stretch reads GGPEAQEGPPGGRSPLGSP. A Phosphoserine modification is found at Ser-371.

This sequence belongs to the DOK family. Type A subfamily. As to quaternary structure, on tyrosine phosphorylation, interacts with CSK and INPP5D/SHIP1 via their SH2 domains. Both Tyr-325 and Tyr-343 are required for interaction with INPP5D. Only Tyr-325 is required for interaction with CSK. Binds ABL1 through the PTB domain and in a kinase-dependent manner. Does not interact with RasGAP. Constitutively tyrosine-phosphorylated. Post-translationally, on IL2 stimulation, phosphorylated on C-terminal tyrosine residues possibly by Src kinases. Can also be phosphorylated by ABL1 kinase. In terms of tissue distribution, predominantly expressed in bone marrow, spleen and lung. Low levels in heart, brain, liver, muscle, thymus, kidney and testis. Highly expressed in B-cells and macrophages.

The protein resides in the cytoplasm. Its subcellular location is the cell membrane. Its function is as follows. DOK proteins are enzymatically inert adaptor or scaffolding proteins. They provide a docking platform for the assembly of multimolecular signaling complexes. DOK3 is a negative regulator of JNK signaling in B-cells through interaction with INPP5D/SHIP1. May modulate ABL1 function. In Mus musculus (Mouse), this protein is Docking protein 3 (Dok3).